Here is a 720-residue protein sequence, read N- to C-terminus: MIIVKVVLPLPIRKYFKYFMPDSMCPIIGGRIVVPFRSKDIVGIVISFCNKKNISNLNLAFVKSCIDTESIYSDVVFSILIWLSRYYYFPIGSIFFSILPKYLKKICLIDNKNYKFAILRKTKYKDFKTFNLLFFCKKKSFIDKDLEKYTFFDFFLKKNFLQKSCKNYFYHENIPHIYQNYLIKKKFFLNKKIIFIINKILMKNCFTSWLITKNNFYLKVKFYLGLIKECLSKNLQILILVPFVKDIYQILFFLKKYFNVYIDIIHSQLNNEDYLKKWIRTKSGKNSIIIGTKNSVFFPFLKLGLIIVNQEHHLNYRNLDQCRYNVRDIAILRAYKQNIPIILDSDTPSLRTLYNILHKKCFYIKFIKNKKTFFLKNNVIDLRKERIKIGLSSTLINEIFNNIQKNYPVLLVLNKFSFVFFGLICRRCGKIEKCHICNDYFETKKYDNFLFCRNCLIKIKKPLFCYNCKNFSLIVFDFGIKKIKNSFKKIFPNINLFFLLSLKKNKTKKLKIQFFKFPISNACIIITTEKISQHYYFPYVRFIALTNVDHYFFSFHFCSIEHFLQFYFNLINLTGENKKLLKIFIQTSYPNNKFLLNLCSSDYFLFCRKILSLRKKYFLPPWNFQVIFYSSSKFFEKSFIFLECIQIILKKQSKRDNVSLWFVGPHPVFSLKDRKKCFYQLLIHSPSRTYLKKILKESINIVQCFSISQNVQWFLDIDIY.

One can recognise a Helicase ATP-binding domain in the interval 200 to 366; it reads ILMKNCFTSW…LHKKCFYIKF (167 aa). Position 213-220 (213-220) interacts with ATP; the sequence is KNNFYLKV. The DEAH box signature appears at 309–312; it reads NQEH. Residues Cys425, Cys428, Cys434, Cys437, Cys452, Cys455, Cys465, and Cys468 each contribute to the Zn(2+) site.

Belongs to the helicase family. PriA subfamily. In terms of assembly, component of the replication restart primosome. Zn(2+) serves as cofactor.

The catalysed reaction is Couples ATP hydrolysis with the unwinding of duplex DNA by translocating in the 3'-5' direction.. It carries out the reaction ATP + H2O = ADP + phosphate + H(+). Its function is as follows. Initiates the restart of stalled replication forks, which reloads the replicative helicase on sites other than the origin of replication. Recognizes and binds to abandoned replication forks and remodels them to uncover a helicase loading site. Promotes assembly of the primosome at these replication forks. This Buchnera aphidicola subsp. Schizaphis graminum (strain Sg) protein is Replication restart protein PriA.